A 484-amino-acid chain; its full sequence is tRNA sulfurtransferase (484 aa).

Positions Ile61 to Arg165 constitute a THUMP domain. Residues Leu183 to Ile184, Lys265, Gly287, and Gln296 each bind ATP. Cysteines 344 and 456 form a disulfide. Residues Leu404–Ser484 enclose the Rhodanese domain. Residue Cys456 is the Cysteine persulfide intermediate of the active site.

Belongs to the ThiI family.

The protein resides in the cytoplasm. It catalyses the reaction [ThiI sulfur-carrier protein]-S-sulfanyl-L-cysteine + a uridine in tRNA + 2 reduced [2Fe-2S]-[ferredoxin] + ATP + H(+) = [ThiI sulfur-carrier protein]-L-cysteine + a 4-thiouridine in tRNA + 2 oxidized [2Fe-2S]-[ferredoxin] + AMP + diphosphate. The enzyme catalyses [ThiS sulfur-carrier protein]-C-terminal Gly-Gly-AMP + S-sulfanyl-L-cysteinyl-[cysteine desulfurase] + AH2 = [ThiS sulfur-carrier protein]-C-terminal-Gly-aminoethanethioate + L-cysteinyl-[cysteine desulfurase] + A + AMP + 2 H(+). It participates in cofactor biosynthesis; thiamine diphosphate biosynthesis. Its function is as follows. Catalyzes the ATP-dependent transfer of a sulfur to tRNA to produce 4-thiouridine in position 8 of tRNAs, which functions as a near-UV photosensor. Also catalyzes the transfer of sulfur to the sulfur carrier protein ThiS, forming ThiS-thiocarboxylate. This is a step in the synthesis of thiazole, in the thiamine biosynthesis pathway. The sulfur is donated as persulfide by IscS. This chain is tRNA sulfurtransferase, found in Histophilus somni (strain 129Pt) (Haemophilus somnus).